The sequence spans 275 residues: Putative Ig-like V-type domain-containing protein FPV055 (275 aa).

Ig-like V-type domains follow at residues 25–122 and 140–239; these read KTFV…MNLG and PRRS…KSLS.

The protein is Putative Ig-like V-type domain-containing protein FPV055 of Fowlpox virus (strain NVSL) (FPV).